We begin with the raw amino-acid sequence, 131 residues long: Translation initiation factor 5A (131 aa).

Lys37 is modified (hypusine).

The protein belongs to the eIF-5A family.

It is found in the cytoplasm. In terms of biological role, functions by promoting the formation of the first peptide bond. The protein is Translation initiation factor 5A (eIF5A) of Methanococcus maripaludis (strain C7 / ATCC BAA-1331).